A 416-amino-acid chain; its full sequence is Tyrosine-protein phosphatase non-receptor type 2 (416 aa).

A Tyrosine-protein phosphatase domain is found at I5–G275. Residue Y22 is modified to Phosphotyrosine. Phosphoserine is present on S52. At Y68 the chain carries Phosphotyrosine. Residues D182, C216 to R222, and Q260 each bind substrate. C216 (phosphocysteine intermediate) is an active-site residue. C216 is subject to S-nitrosocysteine. 5 positions are modified to phosphoserine: S293, S298, S304, S320, and S339. Residues E341–L410 are endoplasmic reticulum location. Positions E371–L410 are may mediate interaction with STX17.

The protein belongs to the protein-tyrosine phosphatase family. Non-receptor class 1 subfamily. Interacts with RMDN3. Interacts with TMED9. Interacts with STX17; dephosphorylates STX17. Interacts with ITGA1 (via cytoplasmic domain); activates the phosphatase activity towards EGFR. Interacts with TRAF2; probably involved in tumor necrosis factor-mediated signaling. Interacts with MET. Interacts with FAM220A and STAT3; interaction with FAM220A promotes interaction of PTPN2 with transcriptional activator STAT3, leading to dephosphorylation of STAT3 by PTPN2 and negative regulation of STAT3 transcriptional activator activity. In terms of processing, specifically phosphorylated in a cell cycle-dependent manner by cyclin-dependent kinases CDK1 and CDK2. Probably activated through phosphorylation by PKR. As to expression, does not show tissue- or cell-type specificity although levels of transcription show variability. Macrophages showed higher levels of expression than lymphocytes.

Its subcellular location is the cytoplasm. The protein localises to the endoplasmic reticulum-Golgi intermediate compartment. It is found in the endoplasmic reticulum. It localises to the nucleus membrane. The protein resides in the nucleus. Its subcellular location is the cell membrane. It catalyses the reaction O-phospho-L-tyrosyl-[protein] + H2O = L-tyrosyl-[protein] + phosphate. Non-receptor type tyrosine-specific phosphatase that dephosphorylates receptor protein tyrosine kinases including INSR, EGFR, CSF1R, PDGFR. Also dephosphorylates non-receptor protein tyrosine kinases like JAK1, JAK2, JAK3, Src family kinases, STAT1, STAT3 and STAT6 either in the nucleus or the cytoplasm. Negatively regulates numerous signaling pathways and biological processes like hematopoiesis, inflammatory response, cell proliferation and differentiation, and glucose homeostasis. Plays a multifaceted and important role in the development of the immune system. Functions in T-cell receptor signaling through dephosphorylation of FYN and LCK to control T-cells differentiation and activation. Dephosphorylates CSF1R, negatively regulating its downstream signaling and macrophage differentiation. Negatively regulates cytokine (IL2/interleukin-2 and interferon)-mediated signaling through dephosphorylation of the cytoplasmic kinases JAK1, JAK3 and their substrate STAT1, that propagate signaling downstream of the cytokine receptors. Also regulates the IL6/interleukin-6 and IL4/interleukin-4 cytokine signaling through dephosphorylation of STAT3 and STAT6 respectively. In addition to the immune system, it is involved in anchorage-dependent, negative regulation of EGF-stimulated cell growth. Activated by the integrin ITGA1/ITGB1, it dephosphorylates EGFR and negatively regulates EGF signaling. Dephosphorylates PDGFRB and negatively regulates platelet-derived growth factor receptor-beta signaling pathway and therefore cell proliferation. Negatively regulates tumor necrosis factor-mediated signaling downstream via MAPK through SRC dephosphorylation. May also regulate the hepatocyte growth factor receptor signaling pathway through dephosphorylation of the hepatocyte growth factor receptor MET. Also plays an important role in glucose homeostasis. For instance, negatively regulates the insulin receptor signaling pathway through the dephosphorylation of INSR and control gluconeogenesis and liver glucose production through negative regulation of the IL6 signaling pathways. May also bind DNA. The chain is Tyrosine-protein phosphatase non-receptor type 2 (Ptpn2) from Rattus norvegicus (Rat).